The following is a 211-amino-acid chain: MRNIQIALTKGRLEKHVIPLFEQIGIDCSELKNKGRKLVFQSKNTNVSFILVKAIDVATYVEHGVADIGIVGKDILMENEKDIYEMLDLGVGICKFCVASIPTYNPKSYRKKRIATKYPHITSTYYHEKGEDVEIIKIEGSVEIAPLLGLADAIVDIVETGKTLQENGLIVFEEMYFISARMIVNKAALKTKKDEIFSIINMMEQEILSGK.

This sequence belongs to the ATP phosphoribosyltransferase family. Short subfamily. Heteromultimer composed of HisG and HisZ subunits.

It is found in the cytoplasm. It catalyses the reaction 1-(5-phospho-beta-D-ribosyl)-ATP + diphosphate = 5-phospho-alpha-D-ribose 1-diphosphate + ATP. It participates in amino-acid biosynthesis; L-histidine biosynthesis; L-histidine from 5-phospho-alpha-D-ribose 1-diphosphate: step 1/9. In terms of biological role, catalyzes the condensation of ATP and 5-phosphoribose 1-diphosphate to form N'-(5'-phosphoribosyl)-ATP (PR-ATP). Has a crucial role in the pathway because the rate of histidine biosynthesis seems to be controlled primarily by regulation of HisG enzymatic activity. This Bacillus cereus (strain B4264) protein is ATP phosphoribosyltransferase.